A 791-amino-acid chain; its full sequence is Primase D5 (791 aa).

The active site involves D174. The tract at residues 346–471 is primase; that stretch reads SDRGEYLVWL…ELMSILDDIQ (126 aa). One can recognise an SF3 helicase domain in the interval 479-641; the sequence is ENRELYEQIL…FTNTKKKVHN (163 aa). 505-512 is a binding site for ATP; sequence GETATGKS.

The protein belongs to the poxviridae D5 family. As to quaternary structure, interacts with A20.

Its function is as follows. Primase which may have roles in initiation of DNA replication or lagging-strand synthesis. The sequence is that of Primase D5 from Fowlpox virus (strain NVSL) (FPV).